The sequence spans 311 residues: Olfactory receptor 5M8 (311 aa).

The Extracellular portion of the chain corresponds to 1 to 24 (MRRNCTLVTEFILLGLTSRRELQI). A glycan (N-linked (GlcNAc...) asparagine) is linked at Asn-4. A helical membrane pass occupies residues 25–45 (LLFTLFLAIYMVTVAGNLGMI). Residues 46-53 (VLIQANAW) are Cytoplasmic-facing. The chain crosses the membrane as a helical span at residues 54–74 (LHMPMYFFLSHLSFVDLCFSS). At 75-98 (NVTPKMLEIFLSEKKSISYPACLV) the chain is on the extracellular side. Cys-96 and Cys-188 form a disulfide bridge. A helical transmembrane segment spans residues 99–119 (QCYLFIALVHVEIYILAVMAF). At 120–138 (DRYMAICNPLLYGSRMSKS) the chain is on the cytoplasmic side. A helical membrane pass occupies residues 139–159 (VCSFLITVPYVYGALTGLMET). Residues 160 to 195 (MWTYNLAFCGPNEINHFYCADPPLIKLACSDTYNKE) lie on the Extracellular side of the membrane. A helical transmembrane segment spans residues 196–216 (LSMFIVAGWNLSFSLFIICIS). The Cytoplasmic segment spans residues 217-236 (YLYIFPAILKIRSTEGRQKA). A helical transmembrane segment spans residues 237-257 (FSTCGSHLTAVTIFYATLFFM). The Extracellular portion of the chain corresponds to 258–270 (YLRPPSKESVEQG). Residues 271–291 (KMVAVFYTTVIPMLNLIIYSL) form a helical membrane-spanning segment. The Cytoplasmic segment spans residues 292 to 311 (RNKNVKEALIKELSMKIYFS).

It belongs to the G-protein coupled receptor 1 family.

Its subcellular location is the cell membrane. Functionally, odorant receptor. In Homo sapiens (Human), this protein is Olfactory receptor 5M8 (OR5M8).